Consider the following 269-residue polypeptide: 5'-nucleotidase SurE (269 aa).

A divalent metal cation is bound by residues D8, D9, S39, and N92.

The protein belongs to the SurE nucleotidase family. It depends on a divalent metal cation as a cofactor.

It is found in the cytoplasm. It carries out the reaction a ribonucleoside 5'-phosphate + H2O = a ribonucleoside + phosphate. Its function is as follows. Nucleotidase that shows phosphatase activity on nucleoside 5'-monophosphates. The protein is 5'-nucleotidase SurE of Psychrobacter cryohalolentis (strain ATCC BAA-1226 / DSM 17306 / VKM B-2378 / K5).